Here is a 930-residue protein sequence, read N- to C-terminus: Translation initiation factor IF-2 (930 aa).

Residues 50 to 67 (FKPAAAPKVEAKPAAPKV) show a composition bias toward low complexity. Disordered stretches follow at residues 50 to 195 (FKPA…PRID) and 260 to 346 (EVVP…HELP). Basic and acidic residues-rich tracts occupy residues 68–90 (SAEKKTEKSEPAKPAVAKEEAKP) and 110–125 (FKAEREARAKEQAERR). The segment covering 129 to 141 (KGNNRDQQQNGNR) has biased composition (low complexity). Basic and acidic residues-rich tracts occupy residues 157 to 167 (RDNRRFNDQAK) and 262 to 295 (VPEKKEPAVDTRRKKQARPDKNRDDYDHEEDGPR). A compositionally biased stretch (low complexity) spans 309–318 (NQKNSNWNNN). The segment covering 337-346 (VTERKFHELP) has biased composition (basic and acidic residues). The tr-type G domain maps to 432–599 (ERPPVVTIMG…TVLLVAEIQE (168 aa)). The interval 441–448 (GHVDHGKT) is G1. 441 to 448 (GHVDHGKT) is a GTP binding site. Residues 466–470 (GITQH) are G2. The interval 487–490 (DTPG) is G3. Residues 487–491 (DTPGH) and 541–544 (NKID) contribute to the GTP site. The interval 541–544 (NKID) is G4. Residues 577–579 (SAK) form a G5 region.

It belongs to the TRAFAC class translation factor GTPase superfamily. Classic translation factor GTPase family. IF-2 subfamily.

The protein resides in the cytoplasm. In terms of biological role, one of the essential components for the initiation of protein synthesis. Protects formylmethionyl-tRNA from spontaneous hydrolysis and promotes its binding to the 30S ribosomal subunits. Also involved in the hydrolysis of GTP during the formation of the 70S ribosomal complex. The sequence is that of Translation initiation factor IF-2 from Streptococcus pneumoniae (strain ATCC BAA-255 / R6).